We begin with the raw amino-acid sequence, 104 residues long: DNA-binding transcriptional repressor TubR (104 aa).

2 consecutive DNA-binding regions (HTH) follow at residues 43 to 50 and 54 to 65; these read KTAVAEMI and KPTVFATVNSFY.

As to quaternary structure, homodimer. Binds to tubC DNA, the TubR-DNA complex binds to TubZ.

Its function is as follows. A DNA-binding protein that is part of the type III plasmid partition system used to ensure correct segregation of the pBtoxis plasmid. Cooperatively binds to the centromere-like site (tubC), which may seed filament formation by the TubZ polymerizing GTPase, stabilizing TubZ filaments. TubR-tubC complexes track the depolymerizing minus end of the filament, probably pulling plasmid within the cell. Required for plasmid replication. Negatively regulates levels of TubZ; its effect on RNA expression has not been shown. Specifically binds iterons, 12-bp imperfect direct repeats that function as a plasmid origin of replication. Four TubR dimers bind to tubC, forming an extended bent DNA-protein filament with protein wrapping helically around the outside of the DNA. In Bacillus thuringiensis subsp. israelensis, this protein is DNA-binding transcriptional repressor TubR.